The chain runs to 164 residues: SsrA-binding protein (164 aa).

It belongs to the SmpB family.

The protein resides in the cytoplasm. Functionally, required for rescue of stalled ribosomes mediated by trans-translation. Binds to transfer-messenger RNA (tmRNA), required for stable association of tmRNA with ribosomes. tmRNA and SmpB together mimic tRNA shape, replacing the anticodon stem-loop with SmpB. tmRNA is encoded by the ssrA gene; the 2 termini fold to resemble tRNA(Ala) and it encodes a 'tag peptide', a short internal open reading frame. During trans-translation Ala-aminoacylated tmRNA acts like a tRNA, entering the A-site of stalled ribosomes, displacing the stalled mRNA. The ribosome then switches to translate the ORF on the tmRNA; the nascent peptide is terminated with the 'tag peptide' encoded by the tmRNA and targeted for degradation. The ribosome is freed to recommence translation, which seems to be the essential function of trans-translation. The protein is SsrA-binding protein of Shewanella sediminis (strain HAW-EB3).